Consider the following 356-residue polypeptide: Tyrosine recombinase XerS (356 aa).

The 106-residue stretch at 16–121 folds into the Core-binding (CB) domain; sequence TMPWYILEYY…ALSSLYKYLT (106 aa). Positions 169–354 constitute a Tyr recombinase domain; that stretch reads EFLQYIDREY…VNDEQKNALN (186 aa). Residues arginine 210, lysine 234, histidine 306, arginine 309, and histidine 332 contribute to the active site. Tyrosine 341 (O-(3'-phospho-DNA)-tyrosine intermediate) is an active-site residue.

Belongs to the 'phage' integrase family. XerS subfamily.

It is found in the cytoplasm. FtsK is required for recombination. In terms of biological role, site-specific tyrosine recombinase, which acts by catalyzing the cutting and rejoining of the recombining DNA molecules. Essential to convert dimers of the bacterial chromosome into monomers to permit their segregation at cell division. This chain is Tyrosine recombinase XerS, found in Streptococcus gordonii (strain Challis / ATCC 35105 / BCRC 15272 / CH1 / DL1 / V288).